A 240-amino-acid polypeptide reads, in one-letter code: Large ribosomal subunit protein uL1 (240 aa).

It belongs to the universal ribosomal protein uL1 family. In terms of assembly, part of the 50S ribosomal subunit.

Its function is as follows. Binds directly to 23S rRNA. The L1 stalk is quite mobile in the ribosome, and is involved in E site tRNA release. Protein L1 is also a translational repressor protein, it controls the translation of the L11 operon by binding to its mRNA. The sequence is that of Large ribosomal subunit protein uL1 from Nocardioides sp. (strain ATCC BAA-499 / JS614).